The primary structure comprises 155 residues: SsrA-binding protein (155 aa).

The protein belongs to the SmpB family.

Its subcellular location is the cytoplasm. Its function is as follows. Required for rescue of stalled ribosomes mediated by trans-translation. Binds to transfer-messenger RNA (tmRNA), required for stable association of tmRNA with ribosomes. tmRNA and SmpB together mimic tRNA shape, replacing the anticodon stem-loop with SmpB. tmRNA is encoded by the ssrA gene; the 2 termini fold to resemble tRNA(Ala) and it encodes a 'tag peptide', a short internal open reading frame. During trans-translation Ala-aminoacylated tmRNA acts like a tRNA, entering the A-site of stalled ribosomes, displacing the stalled mRNA. The ribosome then switches to translate the ORF on the tmRNA; the nascent peptide is terminated with the 'tag peptide' encoded by the tmRNA and targeted for degradation. The ribosome is freed to recommence translation, which seems to be the essential function of trans-translation. The chain is SsrA-binding protein from Gloeothece citriformis (strain PCC 7424) (Cyanothece sp. (strain PCC 7424)).